A 369-amino-acid chain; its full sequence is Developmentally-regulated G-protein 3 (369 aa).

In terms of domain architecture, OBG-type G spans 66 to 291 (SRVGLVGFPS…LLDKIWEYLD (226 aa)). Residues 72–79 (GFPSVGKS), 118–122 (DLPGI), and 249–252 (NKID) contribute to the GTP site. Residues 291–367 (DLTRIYTKPK…EDEDVVQIVK (77 aa)) form the TGS domain.

This sequence belongs to the TRAFAC class OBG-HflX-like GTPase superfamily. OBG GTPase family.

Binds GDP and GTP, and has low GTPase activity in vitro. In Arabidopsis thaliana (Mouse-ear cress), this protein is Developmentally-regulated G-protein 3 (DRG3).